A 182-amino-acid polypeptide reads, in one-letter code: UPF0316 protein BCG9842_B1857 (182 aa).

3 helical membrane passes run 6-26, 32-52, and 58-78; these read LIFVLQIIYVPILTIRTILLV, SAAGVGLLEGAIYIVSLGIVF, and WMNIVAYVIGFSTGLLLGGYI.

This sequence belongs to the UPF0316 family.

It is found in the cell membrane. This is UPF0316 protein BCG9842_B1857 from Bacillus cereus (strain G9842).